We begin with the raw amino-acid sequence, 114 residues long: Vesicle-associated membrane protein 2 (114 aa).

Pro residues predominate over residues 1–11 (MSAPAAGPPAA). The disordered stretch occupies residues 1 to 31 (MSAPAAGPPAAAPGDGAPQGPPNLTSNRRLQ). At Ser-2 the chain carries N-acetylserine. The Cytoplasmic segment spans residues 2-92 (SAPAAGPPAA…KRKYWWKNMK (91 aa)). Positions 29 to 89 (RLQQTQAQVD…AKLKRKYWWK (61 aa)) constitute a v-SNARE coiled-coil homology domain. Residues 93–111 (MMIIMGVICAIILIIIIVY) traverse the membrane as a helical; Anchor for type IV membrane protein segment. Over 112–114 (FST) the chain is Vesicular.

This sequence belongs to the synaptobrevin family.

Its subcellular location is the cytoplasmic vesicle. The protein resides in the secretory vesicle. It is found in the synaptic vesicle membrane. The protein localises to the cell membrane. Involved in the targeting and/or fusion of transport vesicles to their target membrane. Major SNARE protein of synaptic vesicles which mediates fusion of synaptic vesicles to release neurotransmitters. Essential for fast vesicular exocytosis and activity-dependent neurotransmitter release as well as fast endocytosis that mediates rapid reuse of synaptic vesicles. This Xenopus laevis (African clawed frog) protein is Vesicle-associated membrane protein 2 (vamp2).